A 513-amino-acid chain; its full sequence is Putative ATP-dependent RNA helicase QP509L (513 aa).

The Helicase ATP-binding domain maps to K110–P262. L123–T130 lines the ATP pocket. The DEAH box motif lies at D215 to H218.

The protein belongs to the DEAD box helicase family. DEAH subfamily.

The enzyme catalyses ATP + H2O = ADP + phosphate + H(+). The polypeptide is Putative ATP-dependent RNA helicase QP509L (African swine fever virus (isolate Tick/South Africa/Pretoriuskop Pr4/1996) (ASFV)).